The primary structure comprises 438 residues: Xylose isomerase (438 aa).

Catalysis depends on residues histidine 100 and aspartate 103. Glutamate 231, glutamate 267, histidine 270, aspartate 295, aspartate 306, aspartate 308, and aspartate 338 together coordinate Mg(2+).

The protein belongs to the xylose isomerase family. As to quaternary structure, homotetramer. Requires Mg(2+) as cofactor.

It is found in the cytoplasm. The enzyme catalyses alpha-D-xylose = alpha-D-xylulofuranose. The sequence is that of Xylose isomerase from Caldanaerobacter subterraneus subsp. yonseiensis (Thermoanaerobacter yonseiensis).